We begin with the raw amino-acid sequence, 166 residues long: Cyclic pyranopterin monophosphate synthase (166 aa).

Residues 83-85 (LCH) and 121-122 (ME) contribute to the substrate site. The active site involves Asp136.

This sequence belongs to the MoaC family. In terms of assembly, homohexamer; trimer of dimers.

The catalysed reaction is (8S)-3',8-cyclo-7,8-dihydroguanosine 5'-triphosphate = cyclic pyranopterin phosphate + diphosphate. Its pathway is cofactor biosynthesis; molybdopterin biosynthesis. In terms of biological role, catalyzes the conversion of (8S)-3',8-cyclo-7,8-dihydroguanosine 5'-triphosphate to cyclic pyranopterin monophosphate (cPMP). This Syntrophobacter fumaroxidans (strain DSM 10017 / MPOB) protein is Cyclic pyranopterin monophosphate synthase.